The following is a 112-amino-acid chain: Nucleoid-associated protein Pfl01_1806 (112 aa).

This sequence belongs to the YbaB/EbfC family. In terms of assembly, homodimer.

The protein resides in the cytoplasm. It localises to the nucleoid. Its function is as follows. Binds to DNA and alters its conformation. May be involved in regulation of gene expression, nucleoid organization and DNA protection. The sequence is that of Nucleoid-associated protein Pfl01_1806 from Pseudomonas fluorescens (strain Pf0-1).